The sequence spans 263 residues: Small ribosomal subunit protein eS4 (263 aa).

The S4 RNA-binding domain occupies 42 to 105 (LPLIIFLRNR…GENFRLIYDV (64 aa)).

It belongs to the eukaryotic ribosomal protein eS4 family. In terms of assembly, component of the small ribosomal subunit. Part of the small subunit (SSU) processome, composed of more than 70 proteins and the RNA chaperone small nucleolar RNA (snoRNA) U3.

The protein resides in the cytoplasm. It localises to the nucleus. It is found in the nucleolus. Its function is as follows. Component of the small ribosomal subunit. The ribosome is a large ribonucleoprotein complex responsible for the synthesis of proteins in the cell. Part of the small subunit (SSU) processome, first precursor of the small eukaryotic ribosomal subunit. During the assembly of the SSU processome in the nucleolus, many ribosome biogenesis factors, an RNA chaperone and ribosomal proteins associate with the nascent pre-rRNA and work in concert to generate RNA folding, modifications, rearrangements and cleavage as well as targeted degradation of pre-ribosomal RNA by the RNA exosome. The sequence is that of Small ribosomal subunit protein eS4 (rps4x) from Danio rerio (Zebrafish).